Here is a 283-residue protein sequence, read N- to C-terminus: Alpha-ketoglutarate-dependent taurine dioxygenase (283 aa).

Residues H70, Y73, and N95 each contribute to the taurine site. H99 and D101 together coordinate Fe cation. V102 provides a ligand contact to taurine. Position 126 (T126) interacts with 2-oxoglutarate. 3-hydroxytryptophan; by autocatalysis is present on residues W128, W240, and W248. H255 serves as a coordination point for Fe cation. 2-oxoglutarate contacts are provided by H255, R266, and R270. R270 is a taurine binding site.

The protein belongs to the TfdA dioxygenase family. As to quaternary structure, homodimer. Was later shown to be a homotetramer arranged as a dimer of two dimers. It depends on Fe(2+) as a cofactor.

The catalysed reaction is taurine + 2-oxoglutarate + O2 = aminoacetaldehyde + sulfite + succinate + CO2 + H(+). It participates in organosulfur degradation; taurine degradation via aerobic pathway; aminoacetaldehyde and sulfite from taurine: step 1/1. Activated by ascorbate and inhibited by divalent metal ions such as zinc, copper and cobalt. In terms of biological role, catalyzes the alpha-ketoglutarate-dependent hydroxylation of taurine yielding sulfite and aminoacetaldehyde after decomposition of an unstable intermediate. Is required for the utilization of taurine (2-aminoethanesulfonate) as an alternative sulfur source for growth in the absence of sulfate. To a lesser extent, pentanesulfonate, 3-(N-morpholino)propanesulfonate and 1,3-dioxo-2-isoindolineethanesulfonate are also desulfonated by this enzyme in vitro; however, desulfonation by TauD of organosulfonates other than taurine seem to be of little or no importance for sulfur metabolism in vivo. In Escherichia coli (strain K12), this protein is Alpha-ketoglutarate-dependent taurine dioxygenase (tauD).